We begin with the raw amino-acid sequence, 287 residues long: Ventral anterior homeobox 1b (287 aa).

Residues methionine 1 to glutamine 33 show a composition bias toward basic and acidic residues. The segment at methionine 1–serine 55 is disordered. The homeobox DNA-binding region spans proline 89 to glutamine 148.

It belongs to the EMX homeobox family.

Its subcellular location is the nucleus. Involved in ventral eye development. This chain is Ventral anterior homeobox 1b (vax1-b), found in Xenopus laevis (African clawed frog).